Consider the following 247-residue polypeptide: ATP synthase subunit a, chloroplastic (247 aa).

The next 5 membrane-spanning stretches (helical) occupy residues 38–58 (QVLI…TLAV), 95–115 (VPFI…GALL), 134–154 (INTT…AGLT), 199–219 (LVVV…VMFL), and 220–240 (GLFT…AYIG).

Belongs to the ATPase A chain family. In terms of assembly, F-type ATPases have 2 components, CF(1) - the catalytic core - and CF(0) - the membrane proton channel. CF(1) has five subunits: alpha(3), beta(3), gamma(1), delta(1), epsilon(1). CF(0) has four main subunits: a, b, b' and c.

Its subcellular location is the plastid. The protein resides in the chloroplast thylakoid membrane. In terms of biological role, key component of the proton channel; it plays a direct role in the translocation of protons across the membrane. In Vitis vinifera (Grape), this protein is ATP synthase subunit a, chloroplastic.